Consider the following 171-residue polypeptide: 3-hydroxydecanoyl-[acyl-carrier-protein] dehydratase (171 aa).

The active site involves His-70.

This sequence belongs to the thioester dehydratase family. FabA subfamily. As to quaternary structure, homodimer.

The protein resides in the cytoplasm. The catalysed reaction is a (3R)-hydroxyacyl-[ACP] = a (2E)-enoyl-[ACP] + H2O. The enzyme catalyses (3R)-hydroxydecanoyl-[ACP] = (2E)-decenoyl-[ACP] + H2O. It catalyses the reaction (2E)-decenoyl-[ACP] = (3Z)-decenoyl-[ACP]. It participates in lipid metabolism; fatty acid biosynthesis. In terms of biological role, necessary for the introduction of cis unsaturation into fatty acids. Catalyzes the dehydration of (3R)-3-hydroxydecanoyl-ACP to E-(2)-decenoyl-ACP and then its isomerization to Z-(3)-decenoyl-ACP. Can catalyze the dehydratase reaction for beta-hydroxyacyl-ACPs with saturated chain lengths up to 16:0, being most active on intermediate chain length. This Shewanella pealeana (strain ATCC 700345 / ANG-SQ1) protein is 3-hydroxydecanoyl-[acyl-carrier-protein] dehydratase.